We begin with the raw amino-acid sequence, 124 residues long: Putative outer membrane protein CT_569 (124 aa).

Residues methionine 1–alanine 31 form the signal peptide.

The protein resides in the cell outer membrane. The protein is Putative outer membrane protein CT_569 of Chlamydia trachomatis serovar D (strain ATCC VR-885 / DSM 19411 / UW-3/Cx).